The following is a 605-amino-acid chain: Ras guanine nucleotide exchange factor A (605 aa).

Positions 67–99 constitute a LisH domain; it reads DKTAIIQLILQHLSTKGLKQTKQTLEKEARTTT. The 123-residue stretch at 198–320 folds into the N-terminal Ras-GEF domain; sequence DDEVVKFASL…SLTKMVEKLS (123 aa). The region spanning 353–597 is the Ras-GEF domain; it reads DEEEIARQLT…YRESLKREPK (245 aa).

In terms of assembly, component of the Sca1 complex composed of at least gefA, gefH, scaA, phr, and the protein phosphatase 2A subunits pppA and pho2B. Interacts directly with gefH.

It localises to the cell membrane. In terms of biological role, ras-bound GDP/GTP exchange factor required for normal activation of adenylyl cyclase. Component of the Sca1 complex, a regulator of cell motility, chemotaxis and signal relay. The Sca1 complex is recruited to the plasma membrane in a chemoattractant- and F-actin-dependent manner and is enriched at the leading edge of chemotaxing cells where it regulates F-actin dynamics and signal relay by controlling the activation of rasC and the downstream target of rapamycin complex 2 (TORC2)-Akt/protein kinase B (PKB) pathway. The sequence is that of Ras guanine nucleotide exchange factor A (gefA) from Dictyostelium discoideum (Social amoeba).